A 279-amino-acid chain; its full sequence is Movement protein (279 aa).

The tract at residues 246–279 (SESEELNVESPPAAIGSSSASRSEAFRPQVVNGL) is disordered. The span at 254–268 (ESPPAAIGSSSASRS) shows a compositional bias: low complexity.

Belongs to the cucumovirus movement protein family.

It localises to the host cell junction. It is found in the host plasmodesma. In terms of biological role, transports viral genome to neighboring plant cells directly through plasmosdesmata, without any budding. The movement protein allows efficient cell to cell propagation, by bypassing the host cell wall barrier. Acts by forming a tubular structure at the host plasmodesmata, enlarging it enough to allow free passage of virion capsids. This chain is Movement protein, found in Cucumis sativus (Cucumber).